We begin with the raw amino-acid sequence, 143 residues long: Transcription antitermination protein NusB (143 aa).

This sequence belongs to the NusB family.

Its function is as follows. Involved in transcription antitermination. Required for transcription of ribosomal RNA (rRNA) genes. Binds specifically to the boxA antiterminator sequence of the ribosomal RNA (rrn) operons. The protein is Transcription antitermination protein NusB of Desulfatibacillum aliphaticivorans.